Reading from the N-terminus, the 68-residue chain is Metallothionein-3 (68 aa).

Met1 carries the post-translational modification N-acetylmethionine. Residues 1 to 30 (MDPETCPCPSGGSCTCADSCKCEGCKCTSC) are beta. Residues Cys6, Cys8, Cys14, Cys16, Cys20, Cys22, Cys25, Cys27, and Cys30 each coordinate a divalent metal cation. The alpha stretch occupies residues 31-68 (KKSCCSCCPAECEKCAKDCVCKGGEAAEAEAEKCSCCQ). Ser33 bears the Phosphoserine mark. A divalent metal cation contacts are provided by Cys34, Cys35, Cys37, Cys38, Cys42, Cys45, Cys49, Cys51, Cys64, Cys66, and Cys67.

The protein belongs to the metallothionein superfamily. Type 1 family. Abundant in a subset of astrocytes in the normal human brain, but greatly reduced in the Alzheimer disease (AD) brain.

Functionally, binds heavy metals. Contains three zinc and three copper atoms per polypeptide chain and only a negligible amount of cadmium. Inhibits survival and neurite formation of cortical neurons in vitro. The sequence is that of Metallothionein-3 (MT3) from Homo sapiens (Human).